The chain runs to 179 residues: Stathmin-2 (179 aa).

Residues 1–26 (MAKTAMAYKEKMKELSMLSLICSCFY) form a membrane attachment region. Phosphoserine occurs at positions 16, 50, 62, 73, 80, and 97. One can recognise an SLD domain in the interval 38–179 (DDMEVKQINK…NKELQVELSG (142 aa)). The segment at 39-96 (DMEVKQINKRASGQAFELILKPPSPVSEAPRTLASPKKKELSLEEIQKKLEAAEERRK) is regulatory/phosphorylation domain. The stretch at 74–179 (PKKKELSLEE…NKELQVELSG (106 aa)) forms a coiled coil.

This sequence belongs to the stathmin family. As to expression, expression is neuron-specific and found in cerebellum, forebrain, midbrain, tectum and spinal cord.

It is found in the cytoplasm. It localises to the perinuclear region. Its subcellular location is the cell projection. The protein localises to the growth cone. The protein resides in the membrane. It is found in the axon. It localises to the lamellipodium. In terms of biological role, is a key regulator of neurite extension through regulation of microtubule instabilily. This Gallus gallus (Chicken) protein is Stathmin-2 (STMN2).